Consider the following 329-residue polypeptide: MQHLNELVEKAKLAIESIQDKSLTALDEIRVEYFGKKGHFTQLMQELRNVSAEERPAMGAKINEAKQAALEFLNAKKTEWEQAELNSKLEKERVDVSLPGRKVETGGLHPVTMTINRVTKFFSELGFSVENGPEIESDYYNFDALNIPKHHPARADHDTFWFNPELLLRTQTSGVQIRTMEKMQPPIRIMAPGRVYRNDYDQTHTPMFHQIELLYVDKKANFTELKGLLHDFLRAFFEEDLQVRFRPSYFPFTEPSAEVDVMGKNGKWLEVLGCGMVHPNVLRNVGIDPNEYSGFAVGMGVERLTMLRYNVTDLRSFFENDLRFLKQFK.

Glutamate 254 serves as a coordination point for Mg(2+).

It belongs to the class-II aminoacyl-tRNA synthetase family. Phe-tRNA synthetase alpha subunit type 1 subfamily. As to quaternary structure, tetramer of two alpha and two beta subunits. Mg(2+) is required as a cofactor.

Its subcellular location is the cytoplasm. It catalyses the reaction tRNA(Phe) + L-phenylalanine + ATP = L-phenylalanyl-tRNA(Phe) + AMP + diphosphate + H(+). The chain is Phenylalanine--tRNA ligase alpha subunit (pheS) from Haemophilus influenzae (strain ATCC 51907 / DSM 11121 / KW20 / Rd).